A 334-amino-acid polypeptide reads, in one-letter code: Lipoyl synthase (334 aa).

[4Fe-4S] cluster contacts are provided by Cys71, Cys76, Cys82, Cys97, Cys101, Cys104, and Ser312. The region spanning 83-301 (WSHGTATFMV…RQEGLRRGFR (219 aa)) is the Radical SAM core domain.

This sequence belongs to the radical SAM superfamily. Lipoyl synthase family. [4Fe-4S] cluster is required as a cofactor.

The protein localises to the cytoplasm. The enzyme catalyses [[Fe-S] cluster scaffold protein carrying a second [4Fe-4S](2+) cluster] + N(6)-octanoyl-L-lysyl-[protein] + 2 oxidized [2Fe-2S]-[ferredoxin] + 2 S-adenosyl-L-methionine + 4 H(+) = [[Fe-S] cluster scaffold protein] + N(6)-[(R)-dihydrolipoyl]-L-lysyl-[protein] + 4 Fe(3+) + 2 hydrogen sulfide + 2 5'-deoxyadenosine + 2 L-methionine + 2 reduced [2Fe-2S]-[ferredoxin]. Its pathway is protein modification; protein lipoylation via endogenous pathway; protein N(6)-(lipoyl)lysine from octanoyl-[acyl-carrier-protein]: step 2/2. Its function is as follows. Catalyzes the radical-mediated insertion of two sulfur atoms into the C-6 and C-8 positions of the octanoyl moiety bound to the lipoyl domains of lipoate-dependent enzymes, thereby converting the octanoylated domains into lipoylated derivatives. In Halorhodospira halophila (strain DSM 244 / SL1) (Ectothiorhodospira halophila (strain DSM 244 / SL1)), this protein is Lipoyl synthase.